We begin with the raw amino-acid sequence, 457 residues long: Gustatory and odorant receptor 24 (457 aa).

Residues 1 to 115 lie on the Cytoplasmic side of the membrane; sequence MSLYFNADTM…GGTAFVLASP (115 aa). A helical membrane pass occupies residues 116–136; the sequence is SMTYCVLFFLLLTVYIAFILL. Topologically, residues 137–152 are extracellular; that stretch reads NRIEIVRTLEGRFEES. Residues 153 to 173 traverse the membrane as a helical segment; sequence VIAYLFIVNILPILIIPLMWY. Residues 174 to 209 lie on the Cytoplasmic side of the membrane; the sequence is ESRKVVSVVNGWVDFETVYRETTGRALELRLRTKAQ. Residues 210–230 traverse the membrane as a helical segment; that stretch reads VIAILLPILCSLSVAITHVTM. Residues 231 to 237 are Extracellular-facing; it reads VDFKLLQ. Residues 238-258 traverse the membrane as a helical segment; the sequence is VIPYCVLDTITYMMGGYWYMA. Residues 259 to 309 lie on the Cytoplasmic side of the membrane; it reads CETLSITAKILAEDFQRALRHVGPAAKVSEYRSLWLRLSKLARDTGFSTCY. Residues 310–330 form a helical membrane-spanning segment; the sequence is TFTFICLYLFFIITLSIYGLM. The Extracellular segment spans residues 331 to 341; the sequence is SQISDGFGVKD. Residues 342–362 form a helical membrane-spanning segment; sequence IGLAVTAFCSVGLLFYICDEA. Topologically, residues 363–421 are cytoplasmic; sequence HYASFNVRTNFQKKLLMVELSWMNTDAQTEINMFLRATEMNPSSINLGGFFDVNRTLFK. The helical transmembrane segment at 422 to 442 threads the bilayer; that stretch reads SLLATMVTYLVVLLQFQISIP. Residues 443–457 are Extracellular-facing; the sequence is DEPSAMLMHSNSSHS. Asn-453 is a glycosylation site (N-linked (GlcNAc...) asparagine).

This sequence belongs to the insect chemoreceptor superfamily. Gustatory receptor (GR) family. Gr21a subfamily. As to expression, carbon dioxide-responsive neurons coexpress GPRgr22 and GPRgr24 in the maxillary palp, at both larval and adult life stages.

The protein localises to the cell membrane. Gustatory receptor which mediates acceptance or avoidance behavior, depending on its substrates. GPRgr22 and GPRgr24 together are sufficient for olfactory carbon dioxide-chemosensation. The sequence is that of Gustatory and odorant receptor 24 from Anopheles gambiae (African malaria mosquito).